The primary structure comprises 98 residues: Co-chaperonin GroES (98 aa).

This sequence belongs to the GroES chaperonin family. In terms of assembly, heptamer of 7 subunits arranged in a ring. Interacts with the chaperonin GroEL.

The protein localises to the cytoplasm. Its function is as follows. Together with the chaperonin GroEL, plays an essential role in assisting protein folding. The GroEL-GroES system forms a nano-cage that allows encapsulation of the non-native substrate proteins and provides a physical environment optimized to promote and accelerate protein folding. GroES binds to the apical surface of the GroEL ring, thereby capping the opening of the GroEL channel. This is Co-chaperonin GroES from Bartonella tribocorum (strain CIP 105476 / IBS 506).